A 500-amino-acid chain; its full sequence is Glycerol kinase (500 aa).

An ADP-binding site is contributed by T12. T12, T13, and S14 together coordinate ATP. A sn-glycerol 3-phosphate-binding site is contributed by T12. R16 is a binding site for ADP. Residues R82, E83, Y134, and D243 each contribute to the sn-glycerol 3-phosphate site. 5 residues coordinate glycerol: R82, E83, Y134, D243, and Q244. Residues T265 and G308 each contribute to the ADP site. ATP is bound by residues T265, G308, Q312, and G411. G411 serves as a coordination point for ADP.

Belongs to the FGGY kinase family.

It catalyses the reaction glycerol + ATP = sn-glycerol 3-phosphate + ADP + H(+). The protein operates within polyol metabolism; glycerol degradation via glycerol kinase pathway; sn-glycerol 3-phosphate from glycerol: step 1/1. Its activity is regulated as follows. Inhibited by fructose 1,6-bisphosphate (FBP). In terms of biological role, key enzyme in the regulation of glycerol uptake and metabolism. Catalyzes the phosphorylation of glycerol to yield sn-glycerol 3-phosphate. This is Glycerol kinase from Chelativorans sp. (strain BNC1).